The chain runs to 245 residues: MPGRWSAETRLALVRRARRMNRALAQAFPHVYCELDFTTPLELAVATILSAQSTDKRVNLTTPALFARYRTARDYAQADRTELESLIRPTGFYRNKAASLIGLGQALVERFGGEVPATMDKLVTLPGVGRKTANVILGNAFGIPGITVDTHFGRLVRRWRWTTAEDPVKVEQAVGELIERKEWTLLSHRVIFHGRRVCHARRPACGVCVLAKDCPSFGLGPTEPLLAAPLVQGPETDHLLALAGL.

Residues 119–138 (MDKLVTLPGVGRKTANVILG) form the HhH domain. [4Fe-4S] cluster-binding residues include Cys198, Cys205, Cys208, and Cys214.

It belongs to the Nth/MutY family. [4Fe-4S] cluster is required as a cofactor.

It catalyses the reaction 2'-deoxyribonucleotide-(2'-deoxyribose 5'-phosphate)-2'-deoxyribonucleotide-DNA = a 3'-end 2'-deoxyribonucleotide-(2,3-dehydro-2,3-deoxyribose 5'-phosphate)-DNA + a 5'-end 5'-phospho-2'-deoxyribonucleoside-DNA + H(+). Its function is as follows. DNA repair enzyme that has both DNA N-glycosylase activity and AP-lyase activity. The DNA N-glycosylase activity releases various damaged pyrimidines from DNA by cleaving the N-glycosidic bond, leaving an AP (apurinic/apyrimidinic) site. The AP-lyase activity cleaves the phosphodiester bond 3' to the AP site by a beta-elimination, leaving a 3'-terminal unsaturated sugar and a product with a terminal 5'-phosphate. Has a preference for oxidized pyrimidines, such as thymine glycol (prefers 5S isomers) 5,6-dihydrouracil:G, 5-hydroxyuracil:G, 5-hydroxycytosine:G and urea:A. Cleaves ssDNA containing an AP site. This Mycobacterium tuberculosis (strain ATCC 25618 / H37Rv) protein is Endonuclease III.